Here is a 342-residue protein sequence, read N- to C-terminus: Small ribosomal subunit protein uS2 (342 aa).

The tract at residues E235–E283 is disordered. Residues N255 to E283 show a composition bias toward basic and acidic residues.

The protein belongs to the universal ribosomal protein uS2 family.

This is Small ribosomal subunit protein uS2 from Acholeplasma laidlawii (strain PG-8A).